The sequence spans 831 residues: Cadherin-related family member 5 (831 aa).

The signal sequence occupies residues 1–28; that stretch reads MGAPALLWPSLLLPWLTVLFGQPPGTLA. The Extracellular segment spans residues 29-641; it reads QTQVCSVNQT…GQRFSTVDMA (613 aa). 11 N-linked (GlcNAc...) asparagine glycosylation sites follow: Asn36, Asn45, Asn84, Asn135, Asn143, Asn173, Asn201, Asn287, Asn311, Asn408, and Asn475. Cadherin domains lie at 53–125, 128–240, 252–357, and 358–459; these read VNIF…DNAP, SFEI…TPWF, IHAQ…PLQF, and SQSL…ERER. The interval 452-632 is disordered; it reads IQVSERERTP…STGAGEQGDG (181 aa). A compositionally biased stretch (polar residues) spans 473–491; it reads SSNTTMEAPLTSGTSQRPA. The segment covering 505–540 has biased composition (low complexity); that stretch reads GGTTLRPPTPASSIPGGSPTLGTSTSPQTTTPGGDS. Residues 541–554 are compositionally biased toward polar residues; it reads AQTPKPGTSHPTAP. Repeat copies occupy residues 541–571 and 572–602. The tract at residues 541-614 is 3 X 31 AA approximate tandem repeats; sequence AQTPKPGTSH…TPKPGTSQST (74 aa). The span at 555-572 shows a compositional bias: low complexity; the sequence is TSRTSTSLMTTSSRSDST. 2 stretches are compositionally biased toward polar residues: residues 573–582 and 589–623; these read QTPKPGTSQP and ASTSSQPATPSGSSPQTPKPGTSQSTATGPISLPS. One copy of the 3; truncated repeat lies at 605 to 614; that stretch reads TPKPGTSQST. Residues 642–662 traverse the membrane as a helical segment; it reads VLGGVLGALLLLALICLVILV. The Cytoplasmic segment spans residues 663 to 831; sequence HKHYRHRLAC…FGVDADNTYI (169 aa). The interval 663–831 is mediates interaction with USH1C and MYO7B and is required for proper localization to microvilli tips and function in microvilli organization; sequence HKHYRHRLAC…FGVDADNTYI (169 aa). Disordered regions lie at residues 675-774 and 793-831; these read GKAS…GGYK and EPTADVDSASASGSEGSDDDDPDQKKTLRFGVDADNTYI. Phosphoserine is present on residues Ser699, Ser721, and Ser725. Residues 716–738 show a composition bias toward pro residues; sequence PLRPPSPMSSSPTPPSSTPPSPQ. Thr728 carries the post-translational modification Phosphothreonine. Phosphoserine occurs at positions 736 and 753. Positions 761–771 are enriched in basic and acidic residues; sequence LTKERRPEGEG. Thr795 is subject to Phosphothreonine. Over residues 797–807 the composition is skewed to low complexity; the sequence is DVDSASASGSE. 3 positions are modified to phosphoserine: Ser802, Ser804, and Ser806.

Part of the IMAC/intermicrovillar adhesion complex/intermicrovillar tip-link complex composed of ANKS4B, MYO7B, USH1C, CDHR2 and CDHR5. Interacts (via cytoplasmic domain) with USH1C and MYO7B; required for proper localization of CDHR5 to microvilli tips and its function in brush border differentiation. N- and O-glycosylated.

It is found in the apical cell membrane. It localises to the cell projection. Its subcellular location is the microvillus membrane. Its function is as follows. Intermicrovillar adhesion molecule that forms, via its extracellular domain, calcium-dependent heterophilic complexes with CDHR2 on adjacent microvilli. Thereby, controls the packing of microvilli at the apical membrane of epithelial cells. Through its cytoplasmic domain, interacts with microvillus cytoplasmic proteins to form the intermicrovillar adhesion complex/IMAC. This complex plays a central role in microvilli and epithelial brush border differentiation. The chain is Cadherin-related family member 5 from Mus musculus (Mouse).